Consider the following 183-residue polypeptide: Nucleoside triphosphate pyrophosphatase (183 aa).

Asp-71 serves as the catalytic Proton acceptor.

It belongs to the Maf family. Requires a divalent metal cation as cofactor.

Its subcellular location is the cytoplasm. It carries out the reaction a ribonucleoside 5'-triphosphate + H2O = a ribonucleoside 5'-phosphate + diphosphate + H(+). The catalysed reaction is a 2'-deoxyribonucleoside 5'-triphosphate + H2O = a 2'-deoxyribonucleoside 5'-phosphate + diphosphate + H(+). Functionally, nucleoside triphosphate pyrophosphatase. May have a dual role in cell division arrest and in preventing the incorporation of modified nucleotides into cellular nucleic acids. This Campylobacter jejuni subsp. doylei (strain ATCC BAA-1458 / RM4099 / 269.97) protein is Nucleoside triphosphate pyrophosphatase.